Consider the following 500-residue polypeptide: GTPase Der (500 aa).

2 consecutive EngA-type G domains span residues 3–166 (PVVA…MEEL) and 211–384 (IKLA…VSAT). GTP-binding positions include 9–16 (GRPNVGKS), 56–60 (DTGGI), 118–121 (NKID), 217–224 (GRPNVGKS), 264–268 (DTAGV), and 329–332 (NKWD). One can recognise a KH-like domain in the interval 385-469 (KRVGTSVLTR…PIRIQFQNSE (85 aa)). The interval 481 to 500 (LSQERQRKRLVGAVKNRNKK) is disordered. The segment covering 486 to 500 (QRKRLVGAVKNRNKK) has biased composition (basic residues).

It belongs to the TRAFAC class TrmE-Era-EngA-EngB-Septin-like GTPase superfamily. EngA (Der) GTPase family. In terms of assembly, associates with the 50S ribosomal subunit.

GTPase that plays an essential role in the late steps of ribosome biogenesis. The chain is GTPase Der from Aliivibrio salmonicida (strain LFI1238) (Vibrio salmonicida (strain LFI1238)).